Reading from the N-terminus, the 97-residue chain is Small integral membrane protein 8 (97 aa).

The tract at residues 1-24 (MSSAPEPPTFKKEPPKEKDFQSPG) is disordered. Residues 9-20 (TFKKEPPKEKDF) are compositionally biased toward basic and acidic residues. The helical transmembrane segment at 48–67 (PVMAFGLVTLSLCVAYIGYL) threads the bilayer.

It belongs to the SMIM8 family.

The protein resides in the membrane. The chain is Small integral membrane protein 8 (SMIM8) from Pongo abelii (Sumatran orangutan).